The following is a 260-amino-acid chain: Acetylglutamate kinase (260 aa).

Substrate contacts are provided by residues 46 to 47 (GG), R68, and N160.

This sequence belongs to the acetylglutamate kinase family. ArgB subfamily.

The protein localises to the cytoplasm. It carries out the reaction N-acetyl-L-glutamate + ATP = N-acetyl-L-glutamyl 5-phosphate + ADP. It participates in amino-acid biosynthesis; L-arginine biosynthesis; N(2)-acetyl-L-ornithine from L-glutamate: step 2/4. Functionally, catalyzes the ATP-dependent phosphorylation of N-acetyl-L-glutamate. In Shewanella sp. (strain ANA-3), this protein is Acetylglutamate kinase.